Reading from the N-terminus, the 579-residue chain is Golvesin (579 aa).

The segment at 1–75 (MTSVNEHSLL…NNNNNNNNNN (75 aa)) is required for targeting to the plasma membrane. Residues 1-79 (MTSVNEHSLL…NNNNNNSNTG (79 aa)) form a disordered region. At 1–94 (MTSVNEHSLL…KKKKWNFRKK (94 aa)) the chain is on the lumenal side. The segment covering 11 to 77 (INNNENNDNN…NNNNNNNNSN (67 aa)) has biased composition (low complexity). Residues 95–115 (ILPMIVILIITAIVVCLVVFS) traverse the membrane as a helical; Signal-anchor for type III membrane protein segment. Positions 95–118 (ILPMIVILIITAIVVCLVVFSLPF) are required for membrane targeting. The Cytoplasmic segment spans residues 116 to 578 (LPFDSSNTIY…SNDFVIAESP (463 aa)). The required for transfer to endosomes and contractile vacuoles; the protein is trapped in the Golgi stretch occupies residues 559 to 579 (WPSSKGIPGFSNDFVIAESPE).

The protein resides in the contractile vacuole membrane. It is found in the endosome membrane. It localises to the golgi apparatus membrane. The sequence is that of Golvesin (gol) from Dictyostelium discoideum (Social amoeba).